A 204-amino-acid chain; its full sequence is MSPLLVASRNRKKLAELRRVLDAAGVTGLTLVSLDDVAPFEEAPETGAVFEENALAKARDAFAATGLASVADDSGLEVAALNGMPGVLSARWSGRHGDDAANTALLLAQLRDVPDERRAASFVSACALVSASGEVVVRGEWPGRIAREPRGDGGFGYDPVFVPDDAAGRTAAQLSPAEKDAVSHRGRALRLLVPALETLARARG.

8–13 (SRNRKK) is a substrate binding site. Residue D73 is the Proton acceptor of the active site. Residue D73 coordinates Mg(2+). Residues S74, 155–158 (FGYD), K179, and 184–185 (HR) each bind substrate.

This sequence belongs to the HAM1 NTPase family. In terms of assembly, homodimer. Requires Mg(2+) as cofactor.

The enzyme catalyses XTP + H2O = XMP + diphosphate + H(+). It carries out the reaction dITP + H2O = dIMP + diphosphate + H(+). The catalysed reaction is ITP + H2O = IMP + diphosphate + H(+). Its function is as follows. Pyrophosphatase that catalyzes the hydrolysis of nucleoside triphosphates to their monophosphate derivatives, with a high preference for the non-canonical purine nucleotides XTP (xanthosine triphosphate), dITP (deoxyinosine triphosphate) and ITP. Seems to function as a house-cleaning enzyme that removes non-canonical purine nucleotides from the nucleotide pool, thus preventing their incorporation into DNA/RNA and avoiding chromosomal lesions. This chain is dITP/XTP pyrophosphatase, found in Mycolicibacterium paratuberculosis (strain ATCC BAA-968 / K-10) (Mycobacterium paratuberculosis).